The sequence spans 508 residues: 3-octaprenyl-4-hydroxybenzoate carboxy-lyase (508 aa).

Residue Asn178 coordinates Mn(2+). Residues 181 to 183 (IYR), 195 to 197 (RWL), and 200 to 201 (RG) each bind prenylated FMN. Glu244 contacts Mn(2+). Residue Asp303 is the Proton donor of the active site.

Belongs to the UbiD family. Homohexamer. Requires prenylated FMN as cofactor. The cofactor is Mn(2+).

The protein localises to the cell membrane. The enzyme catalyses a 4-hydroxy-3-(all-trans-polyprenyl)benzoate + H(+) = a 2-(all-trans-polyprenyl)phenol + CO2. It participates in cofactor biosynthesis; ubiquinone biosynthesis. In terms of biological role, catalyzes the decarboxylation of 3-octaprenyl-4-hydroxy benzoate to 2-octaprenylphenol, an intermediate step in ubiquinone biosynthesis. This chain is 3-octaprenyl-4-hydroxybenzoate carboxy-lyase, found in Cupriavidus taiwanensis (strain DSM 17343 / BCRC 17206 / CCUG 44338 / CIP 107171 / LMG 19424 / R1) (Ralstonia taiwanensis (strain LMG 19424)).